The following is a 379-amino-acid chain: Cathepsin B-like protease 1 (379 aa).

The signal sequence occupies residues 1–30 (MADSCCIRLHLLASVFLLLFSSFNLQGIAA). The propeptide at 31–102 (ENLSKQKLTS…PIVRHDLSLK (72 aa)) is activation peptide. N32 and N69 each carry an N-linked (GlcNAc...) asparagine glycan. 6 disulfide bridges follow: C116–C165, C148–C191, C182–C236, C183–C187, C213–C240, and C222–C227. C151 is an active-site residue. N171 is a glycosylation site (N-linked (GlcNAc...) asparagine). Residues H306 and N327 contribute to the active site. N-linked (GlcNAc...) asparagine glycosylation is present at N330. Positions 363 to 379 (NVFKGITTSDDLLVSSV) are cleaved as a propeptide — removed in mature form.

Belongs to the peptidase C1 family.

Its function is as follows. Thiol protease that plays a central role in plant programmed cell death (PCD). In addition to its role in protein degradation, may cleave and/or degrade a number of target proteins, activating signaling towards PCD. Contributes to the increase of caspase-3-like activity after UV-C-induced PCD and is required for abiotic stress-induced PCD. Functions redundantly with CATHB2 and CATHB3 in basal defense and distinct forms of plant programmed cell death (PCD). Participates in the establishment of basal resistance against the bacterial pathogen Pseudomonase syringae pv. tomato DC3000. Required for full levels of PCD during resistance (R) gene-mediated hypersensitive response (HR). Involved in the regulation of senescence, a developmental form of PCD in plants. The chain is Cathepsin B-like protease 1 from Arabidopsis thaliana (Mouse-ear cress).